The primary structure comprises 485 residues: Noelin (485 aa).

The signal sequence occupies residues 1–16 (MSVPLLKIGVVLSTMA). Asparagine 33, asparagine 103, asparagine 187, asparagine 288, asparagine 307, asparagine 394, asparagine 431, and asparagine 473 each carry an N-linked (GlcNAc...) asparagine glycan. Positions 87–225 (RDARTKQLRQ…ERLRACMQKL (139 aa)) form a coiled coil. The Olfactomedin-like domain maps to 226–478 (ACGKLTGISD…QILYNVTLFH (253 aa)). Cysteine 227 and cysteine 409 are joined by a disulfide.

In terms of assembly, homotetramer; disulfide-linked. Dimer of dimers, giving rise to a V-shaped homotretramer. Component of the AMPAR complex. In terms of processing, glycosylated.

It is found in the secreted. The protein resides in the synapse. Its subcellular location is the endoplasmic reticulum. It localises to the cell projection. The protein localises to the axon. It is found in the perikaryon. Functionally, contributes to the regulation of axonal growth. May play an important role in regulating the production of neural crest cells by the neural tube. The polypeptide is Noelin (OLFM1) (Gallus gallus (Chicken)).